The following is a 218-amino-acid chain: Adenylate kinase (218 aa).

Position 10–15 (10–15) interacts with ATP; that stretch reads GAGKGT. Residues 30–59 form an NMP region; it reads STGDMLRAAVKQGTPLGQEAKKVMDAGGLV. AMP is bound by residues T31, R36, 57–59, 85–88, and Q92; these read GLV and GFPR. An LID region spans residues 122–159; the sequence is GRRVHPASGRSYHVRFNPPKQEGLDDVTGEPLVQRDDD. ATP contacts are provided by residues R123 and 132 to 133; that span reads SY. Positions 156 and 167 each coordinate AMP. Residue G203 coordinates ATP.

Belongs to the adenylate kinase family. Monomer.

It localises to the cytoplasm. It carries out the reaction AMP + ATP = 2 ADP. It participates in purine metabolism; AMP biosynthesis via salvage pathway; AMP from ADP: step 1/1. In terms of biological role, catalyzes the reversible transfer of the terminal phosphate group between ATP and AMP. Plays an important role in cellular energy homeostasis and in adenine nucleotide metabolism. The protein is Adenylate kinase of Bordetella petrii (strain ATCC BAA-461 / DSM 12804 / CCUG 43448).